We begin with the raw amino-acid sequence, 121 residues long: Large ribosomal subunit protein uL18 (121 aa).

This sequence belongs to the universal ribosomal protein uL18 family. Part of the 50S ribosomal subunit; part of the 5S rRNA/L5/L18/L25 subcomplex. Contacts the 5S and 23S rRNAs.

In terms of biological role, this is one of the proteins that bind and probably mediate the attachment of the 5S RNA into the large ribosomal subunit, where it forms part of the central protuberance. In Burkholderia ambifaria (strain MC40-6), this protein is Large ribosomal subunit protein uL18.